The chain runs to 305 residues: tRNA dimethylallyltransferase (305 aa).

11-18 (GPTAVGKT) serves as a coordination point for ATP. Residue 13–18 (TAVGKT) participates in substrate binding. Residues 36 to 39 (DSMQ) form an interaction with substrate tRNA region.

The protein belongs to the IPP transferase family. In terms of assembly, monomer. Mg(2+) serves as cofactor.

The catalysed reaction is adenosine(37) in tRNA + dimethylallyl diphosphate = N(6)-dimethylallyladenosine(37) in tRNA + diphosphate. In terms of biological role, catalyzes the transfer of a dimethylallyl group onto the adenine at position 37 in tRNAs that read codons beginning with uridine, leading to the formation of N6-(dimethylallyl)adenosine (i(6)A). This Listeria monocytogenes serovar 1/2a (strain ATCC BAA-679 / EGD-e) protein is tRNA dimethylallyltransferase.